The primary structure comprises 614 residues: Leucine-rich repeat and immunoglobulin-like domain-containing nogo receptor-interacting protein 1 (614 aa).

The N-terminal stretch at 1 to 35 is a signal peptide; the sequence is MLAGGVRSMPSPLLACWQPILLLVLGSVLSGSATG. Disulfide bonds link C36–C42 and C40–C51. The region spanning 36–65 is the LRRNT domain; that stretch reads CPPRCECSAQDRAVLCHRKRFVAVPEGIPT. Topologically, residues 36-555 are extracellular; that stretch reads CPPRCECSAQ…FDIKTLIIAT (520 aa). 11 LRR repeats span residues 66-87, 90-111, 114-135, 138-159, 162-183, 186-207, 210-231, 258-279, 282-303, 306-327, and 330-351; these read ETRLLDLGKNRIKTLNQDEFAS, HLEELELNENIVSAVEPGAFNN, NLRTLGLRSNRLKLIPLGVFTG, NLTKLDISENKIVILLDYMFQD, NLKSLEVGDNDLVYISHRAFSG, SLEQLTLEKCNLTSIPTEALSH, GLIVLRLRHLNINAIRDYSFKR, NLTSLSITHCNLTAVPYLAVRH, YLRFLNLSYNPISTIEGSMLHE, RLQEIQLVGGQLAVVEPYAFRG, and YLRVLNVSGNQLTTLEESVFHS. An N-linked (GlcNAc...) asparagine glycan is attached at N138. N-linked (GlcNAc...) asparagine glycosylation is present at N196. N-linked (GlcNAc...) asparagine glycosylation is found at N258, N268, and N287. N335 carries N-linked (GlcNAc...) asparagine glycosylation. The LRRCT domain occupies 363 to 417; it reads NPLACDCRLLWVFRRRWRLNFNRQQPTCATPEFVQGKEFKDFPDVLLPNYFTCRR. Intrachain disulfides connect C367–C390, C369–C415, and C440–C491. The Ig-like C2-type domain maps to 405–507; the sequence is PDVLLPNYFT…GNDSMPAHLH (103 aa). 4 N-linked (GlcNAc...) asparagine glycosylation sites follow: N486, N499, N520, and N536. Residues 556 to 576 form a helical membrane-spanning segment; the sequence is TMGFISFLGVVLFCLVLLFLW. The Cytoplasmic segment spans residues 577–614; it reads SRGKGNTKHNIEIEYVPRKSDAGISSADAPRKFNMKMI. S596 carries the phosphoserine modification.

Homotetramer. Forms a ternary complex with RTN4R/NGFR and RTN4R/TNFRSF19. Interacts with NGRF, RTN4R and MYT1L. Post-translationally, N-glycosylated. Contains predominantly high-mannose glycans.

The protein localises to the cell membrane. Its function is as follows. Functional component of the Nogo receptor signaling complex (RTN4R/NGFR) in RhoA activation responsible for some inhibition of axonal regeneration by myelin-associated factors. Is also an important negative regulator of oligodentrocyte differentiation and axonal myelination. Acts in conjunction with RTN4 and RTN4R in regulating neuronal precursor cell motility during cortical development. The polypeptide is Leucine-rich repeat and immunoglobulin-like domain-containing nogo receptor-interacting protein 1 (LINGO1) (Pongo abelii (Sumatran orangutan)).